The sequence spans 347 residues: GTPase Obg (347 aa).

The region spanning Met1–Ile159 is the Obg domain. The OBG-type G domain occupies Ala160 to Gly328. GTP contacts are provided by residues Gly166–Ser173, Phe191–Gln195, Asp213–Gly216, Asn280–Asp283, and Ser309–Ile311. Positions 173 and 193 each coordinate Mg(2+).

This sequence belongs to the TRAFAC class OBG-HflX-like GTPase superfamily. OBG GTPase family. In terms of assembly, monomer. It depends on Mg(2+) as a cofactor.

Its subcellular location is the cytoplasm. In terms of biological role, an essential GTPase which binds GTP, GDP and possibly (p)ppGpp with moderate affinity, with high nucleotide exchange rates and a fairly low GTP hydrolysis rate. Plays a role in control of the cell cycle, stress response, ribosome biogenesis and in those bacteria that undergo differentiation, in morphogenesis control. The protein is GTPase Obg of Synechococcus sp. (strain JA-2-3B'a(2-13)) (Cyanobacteria bacterium Yellowstone B-Prime).